We begin with the raw amino-acid sequence, 105 residues long: Thiosulfate sulfurtransferase GlpE (105 aa).

In terms of domain architecture, Rhodanese spans 15–103 (MQQGAILVDI…WCRAELPIDT (89 aa)). Residue C63 is the Cysteine persulfide intermediate of the active site.

This sequence belongs to the GlpE family.

It localises to the cytoplasm. The enzyme catalyses thiosulfate + hydrogen cyanide = thiocyanate + sulfite + 2 H(+). The catalysed reaction is thiosulfate + [thioredoxin]-dithiol = [thioredoxin]-disulfide + hydrogen sulfide + sulfite + 2 H(+). Its function is as follows. Transferase that catalyzes the transfer of sulfur from thiosulfate to thiophilic acceptors such as cyanide or dithiols. May function in a CysM-independent thiosulfate assimilation pathway by catalyzing the conversion of thiosulfate to sulfite, which can then be used for L-cysteine biosynthesis. The protein is Thiosulfate sulfurtransferase GlpE of Haemophilus influenzae (strain 86-028NP).